We begin with the raw amino-acid sequence, 715 residues long: ATP-dependent zinc metalloprotease FtsH (715 aa).

Over 1-10 the chain is Cytoplasmic; the sequence is MKNKNRGFFR. A helical transmembrane segment spans residues 11–31; sequence SSLSYAFVILAVIFLIYSFFG. Residues 32 to 137 lie on the Extracellular side of the membrane; it reads RSDGSVKHLS…KPAASNFWGS (106 aa). The chain crosses the membrane as a helical span at residues 138–158; the sequence is MLTLILPTLIMFALLYWMLIG. Over 159–715 the chain is Cytoplasmic; sequence SQRGQGGSGG…LLDAVNNKFD (557 aa). The disordered stretch occupies residues 167-187; the sequence is GGPGGIMSFGRSKAKPADPKQ. 233 to 240 is a binding site for ATP; sequence GPPGTGKT. Zn(2+) is bound at residue H455. E456 is an active-site residue. 2 residues coordinate Zn(2+): H459 and D531.

The protein in the central section; belongs to the AAA ATPase family. In the C-terminal section; belongs to the peptidase M41 family. In terms of assembly, homohexamer. Zn(2+) serves as cofactor.

The protein resides in the cell membrane. Acts as a processive, ATP-dependent zinc metallopeptidase for both cytoplasmic and membrane proteins. Plays a role in the quality control of integral membrane proteins. Functionally, can complement an E.coli ftsH disruption mutant. The protein is ATP-dependent zinc metalloprotease FtsH of Oenococcus oeni (Leuconostoc oenos).